A 228-amino-acid chain; its full sequence is MQKLKQQVFEANMDLPRYGLVTFTWGNVSAIDRERGLVVIKPSGVAYETMKADDMVVVDMSGKVVEGEYRPSSDTATYLELYRRYPSLGGIVHTHSTHATAWAQAGLAIPALGTTHADYFFGDIPCTRGLSEEEVQGEYELNTGKVIIETLGDAEPLHTPGIVVYQHGPFAWGKDAHDAVHNAVVMEEVAKMAWIARSINPQLNHIDSFLMNKHFMRKHGPNAYYGQK.

Substrate-binding positions include 26-27 (GN), 43-44 (SG), and 72-73 (SS). Residues Asp-74, His-93, and His-95 each coordinate Zn(2+). Catalysis depends on Asp-118, which acts as the Proton donor/acceptor. His-167 provides a ligand contact to Zn(2+). Tyr-225 (proton donor/acceptor) is an active-site residue.

This sequence belongs to the aldolase class II family. AraD/FucA subfamily. Zn(2+) serves as cofactor.

The enzyme catalyses L-ribulose 5-phosphate = D-xylulose 5-phosphate. It functions in the pathway cofactor degradation; L-ascorbate degradation; D-xylulose 5-phosphate from L-ascorbate: step 4/4. Its function is as follows. Catalyzes the isomerization of L-ribulose 5-phosphate to D-xylulose 5-phosphate. Is involved in the anaerobic L-ascorbate utilization. The chain is L-ribulose-5-phosphate 4-epimerase UlaF from Shigella sonnei (strain Ss046).